Consider the following 475-residue polypeptide: Squamosa promoter-binding-like protein 12 (475 aa).

The disordered stretch occupies residues 49–73 (NHGSTNSSGGTFTSSSELANGSSKS). Residues 51-73 (GSTNSSGGTFTSSSELANGSSKS) show a composition bias toward low complexity. The segment at 177–254 (SSYCQVEGCK…SDHNARRRKP (78 aa)) adopts an SBP-type zinc-finger fold. Zn(2+) contacts are provided by Cys180, Cys185, Cys202, His205, Cys221, Cys224, His228, and Cys240. A Bipartite nuclear localization signal motif is present at residues 237 to 253 (KKSCRRRLSDHNARRRK). The tract at residues 437–475 (GGGGFWQDGDDPPPLDHASQAQAFMHPGNGSSSGYGHLH) is disordered. Over residues 465–475 (NGSSSGYGHLH) the composition is skewed to polar residues.

As to expression, expressed in young panicles.

Its subcellular location is the nucleus. Its function is as follows. Trans-acting factor that binds specifically to the consensus nucleotide sequence 5'-TNCGTACAA-3'. May be involved in panicle development. The protein is Squamosa promoter-binding-like protein 12 (SPL12) of Oryza sativa subsp. japonica (Rice).